The chain runs to 393 residues: Protein TsgA (393 aa).

12 consecutive transmembrane segments (helical) span residues 11 to 31 (WISFLSYALTGALVIVTGMVM), 51 to 71 (FLNAGILISIFLNAWLMEIIP), 78 to 98 (FGFILMVLAVAGLMFSHSLAL), 101 to 121 (AAMFVLGLVSGITMSIGTFLI), 134 to 154 (LLFTDSFFSMAGMIFPMVAAF), 162 to 182 (WYWVYACIGLVYLAIFILTFG), 206 to 226 (IGVLFLAVAALCYILGQLGFI), 245 to 265 (ALVSDFWMSYMFGMWAFSFIL), 273 to 293 (ILTVLAGIAAVLMYLFITGTQ), 298 to 318 (WFILTLGFFSSAIYTSIITLG), 332 to 352 (FILTCGTIGTMLTFVVTGPIV), and 361 to 381 (LLTANGLYAVVFVMCFALGFV).

It belongs to the major facilitator superfamily. TsgA family.

The protein localises to the cell inner membrane. In Salmonella schwarzengrund (strain CVM19633), this protein is Protein TsgA.